The sequence spans 115 residues: Ribonuclease P protein component (115 aa).

The protein belongs to the RnpA family. As to quaternary structure, consists of a catalytic RNA component (M1 or rnpB) and a protein subunit.

The catalysed reaction is Endonucleolytic cleavage of RNA, removing 5'-extranucleotides from tRNA precursor.. RNaseP catalyzes the removal of the 5'-leader sequence from pre-tRNA to produce the mature 5'-terminus. It can also cleave other RNA substrates such as 4.5S RNA. The protein component plays an auxiliary but essential role in vivo by binding to the 5'-leader sequence and broadening the substrate specificity of the ribozyme. The protein is Ribonuclease P protein component of Symbiobacterium thermophilum (strain DSM 24528 / JCM 14929 / IAM 14863 / T).